Reading from the N-terminus, the 583-residue chain is Membrane-bound O-acyltransferase gup1 (583 aa).

The Extracellular segment spans residues Met-1–Ser-52. Residues Lys-15 to Leu-42 are disordered. A compositionally biased stretch (low complexity) spans Ser-22–Ser-40. Residues Ala-53–Ala-73 traverse the membrane as a helical segment. Residues Cys-74–Met-119 lie on the Cytoplasmic side of the membrane. A helical membrane pass occupies residues Pro-120–Phe-140. At Thr-141–Ser-159 the chain is on the extracellular side. Residues Leu-160 to Ile-180 traverse the membrane as a helical segment. Residues Asn-181 to Ser-191 are Cytoplasmic-facing. The chain crosses the membrane as a helical span at residues Ile-192–Phe-212. Residues Ala-213–Lys-298 lie on the Extracellular side of the membrane. A helical transmembrane segment spans residues Asn-299 to Asn-319. Over Asn-320–Arg-343 the chain is Cytoplasmic. The chain crosses the membrane as a helical span at residues Phe-344–Ser-364. Residues Lys-365–Ser-373 are Extracellular-facing. The helical transmembrane segment at Ala-374–Ile-394 threads the bilayer. Residues Pro-395–Tyr-444 lie on the Cytoplasmic side of the membrane. 2 helical membrane-spanning segments follow: residues Val-445 to Ala-465 and Leu-466 to Leu-486. Residue His-468 is part of the active site. Residues Pro-487–Phe-512 lie on the Cytoplasmic side of the membrane. Residues Gly-513–Ile-533 form a helical membrane-spanning segment. Topologically, residues Asp-534–Gly-549 are extracellular. Residues Ala-550–Ile-570 traverse the membrane as a helical segment. Residues Arg-571–Cys-583 are Cytoplasmic-facing.

This sequence belongs to the membrane-bound acyltransferase family.

The protein resides in the cell membrane. It localises to the endoplasmic reticulum membrane. The protein localises to the mitochondrion membrane. In terms of biological role, membrane-bound O-acyltransferase involved in the remodeling of glycosylphosphatidylinositol (GPI) anchors. Acts only on GPI-anchored proteins, but not on free GPI lipids. Also involved in lipid metabolism, having profound effects on sphingolipid-sterol-ordered domains integrity and assembly. Involved in cell integrity and apoptosis. This chain is Membrane-bound O-acyltransferase gup1 (gup1), found in Schizosaccharomyces pombe (strain 972 / ATCC 24843) (Fission yeast).